The sequence spans 161 residues: Pathogenesis-related protein 1 (161 aa).

The signal sequence occupies residues 1–26 (MKVTSYSRILIILAALVGALVVPLKA). Residues 34 to 149 (VNAHNQARSQ…NGGTIISCNY (116 aa)) enclose the SCP domain. Intrachain disulfides connect Cys-70–Cys-138, Cys-113–Cys-117, and Cys-133–Cys-147.

Belongs to the CRISP family. In terms of tissue distribution, expressed in flowers, stems and roots but not in leaves.

Probably involved in the defense reaction of plants against pathogens. This is Pathogenesis-related protein 1 from Arabidopsis thaliana (Mouse-ear cress).